The sequence spans 402 residues: MAAFNFEAFSLTPQGSTISAAPRPAAPAIDRTVQQQCGSFGYGNRAFQFDFASLESLPEDANPGLTEVLTAKYWNHFSIQLGHWNTLKVIVLDAQMFSIMPDHTKKGVLNTMKSYLGGADAMYARDADNGQVVILAPRRLMESNITIVGSTTVWDPKKRHVQATAEAKIPRPPNAYILYRKDQQAALKAANPGIPNNDISVMTGGMWKKESPEVRAEYQRRASEIKAKLMSAHPHYRYVPRRSSEIRRRAPRRNRAQEVANASPIGENSGAPIVGNPIVTTMEQQQPLPDISIAPNQEITKDNDVSHLIDPPHVFSGQITELMPDVANFLPPMIREGWSPLHDFRAVLNGHTGNNGVDCALTPESESQDDFVGTPSSTMPDNSAFDWITGTEEDLAQIFGQF.

The HMG box DNA-binding region spans 169–237 (IPRPPNAYIL…KLMSAHPHYR (69 aa)). The disordered stretch occupies residues 246 to 272 (IRRRAPRRNRAQEVANASPIGENSGAP).

Its subcellular location is the nucleus. In terms of biological role, controls fertilization, probably by determining the mating type. The polypeptide is MAT+ sexual cell fertilization-promoting factor (FPR1) (Podospora anserina (Pleurage anserina)).